The following is a 571-amino-acid chain: Proline--tRNA ligase (571 aa).

This sequence belongs to the class-II aminoacyl-tRNA synthetase family. ProS type 1 subfamily. In terms of assembly, homodimer.

Its subcellular location is the cytoplasm. It catalyses the reaction tRNA(Pro) + L-proline + ATP = L-prolyl-tRNA(Pro) + AMP + diphosphate. Catalyzes the attachment of proline to tRNA(Pro) in a two-step reaction: proline is first activated by ATP to form Pro-AMP and then transferred to the acceptor end of tRNA(Pro). As ProRS can inadvertently accommodate and process non-cognate amino acids such as alanine and cysteine, to avoid such errors it has two additional distinct editing activities against alanine. One activity is designated as 'pretransfer' editing and involves the tRNA(Pro)-independent hydrolysis of activated Ala-AMP. The other activity is designated 'posttransfer' editing and involves deacylation of mischarged Ala-tRNA(Pro). The misacylated Cys-tRNA(Pro) is not edited by ProRS. The sequence is that of Proline--tRNA ligase from Azotobacter vinelandii (strain DJ / ATCC BAA-1303).